The sequence spans 398 residues: Elongation factor Tu (398 aa).

The region spanning 10-207 (KPHVNIGTIG…TVDEYIPEPE (198 aa)) is the tr-type G domain. Residues 19 to 26 (GHVDHGKT) form a G1 region. GTP is bound at residue 19–26 (GHVDHGKT). Residue Thr26 coordinates Mg(2+). A G2 region spans residues 63–67 (GITIN). The tract at residues 84-87 (DAPG) is G3. GTP is bound by residues 84 to 88 (DAPGH) and 139 to 142 (NKVD). Residues 139-142 (NKVD) form a G4 region. Positions 177-179 (SAL) are G5.

The protein belongs to the TRAFAC class translation factor GTPase superfamily. Classic translation factor GTPase family. EF-Tu/EF-1A subfamily. Monomer.

It is found in the cytoplasm. The enzyme catalyses GTP + H2O = GDP + phosphate + H(+). Functionally, GTP hydrolase that promotes the GTP-dependent binding of aminoacyl-tRNA to the A-site of ribosomes during protein biosynthesis. The chain is Elongation factor Tu from Streptococcus pneumoniae serotype 4 (strain ATCC BAA-334 / TIGR4).